The chain runs to 302 residues: MNQTAINRADARTRFIFDDMPVRGLHVRLENVWHHIVKQKNYPAAIRCALGELLAAGVLLSGNLKNEGTLIVQVQGQGKLKMLVAEATSDRTVRATARWDETAEIADDESLGDLLGGNGVFVLTLQPKDGEPWQGVVPLEGGSIAQMLVNYMKRSEQLDTHIALSASDEAAGGLLVQRLPEEVLDEEAWEHVSTLARTLTAEELAELDAQHVLYRLFHETPPRVFEPETFESSCTCSRGKVSDMLLMLGGEEVGGVVAEQGSIEVDCDFCHSKYVFDETDVNALFGEDVVGVAKGLPRHTVQ.

Intrachain disulfides connect C234–C236 and C267–C270.

This sequence belongs to the HSP33 family. In terms of processing, under oxidizing conditions two disulfide bonds are formed involving the reactive cysteines. Under reducing conditions zinc is bound to the reactive cysteines and the protein is inactive.

The protein localises to the cytoplasm. Redox regulated molecular chaperone. Protects both thermally unfolding and oxidatively damaged proteins from irreversible aggregation. Plays an important role in the bacterial defense system toward oxidative stress. In Neisseria gonorrhoeae (strain ATCC 700825 / FA 1090), this protein is 33 kDa chaperonin.